Consider the following 304-residue polypeptide: D-alanine--D-alanine ligase (304 aa).

An ATP-grasp domain is found at 104-299 (KMVWLSCGLP…FEALCLAILA (196 aa)). 130 to 185 (ARDLGLPIFVKPVHEGSSMGATKVTEAGQLRAAWELAARYDSLVIAEEFISGQELT) provides a ligand contact to ATP. The Mg(2+) site is built by Asp-253, Glu-266, and Asn-268.

Belongs to the D-alanine--D-alanine ligase family. Mg(2+) serves as cofactor. Mn(2+) is required as a cofactor.

The protein localises to the cytoplasm. It catalyses the reaction 2 D-alanine + ATP = D-alanyl-D-alanine + ADP + phosphate + H(+). It functions in the pathway cell wall biogenesis; peptidoglycan biosynthesis. Its function is as follows. Cell wall formation. In Azoarcus sp. (strain BH72), this protein is D-alanine--D-alanine ligase.